A 183-amino-acid chain; its full sequence is TATA-box-binding protein 2 (183 aa).

Repeat copies occupy residues 8-84 (IENV…AKKL) and 99-177 (VQNI…RQQL).

It belongs to the TBP family.

Functionally, general factor that plays a role in the activation of archaeal genes transcribed by RNA polymerase. Binds specifically to the TATA box promoter element which lies close to the position of transcription initiation. The polypeptide is TATA-box-binding protein 2 (Methanosarcina mazei (strain ATCC BAA-159 / DSM 3647 / Goe1 / Go1 / JCM 11833 / OCM 88) (Methanosarcina frisia)).